A 254-amino-acid chain; its full sequence is uncharacterized protein (254 aa).

Residues Ile18, Ser37, Asp63, Asn90, Tyr159, Lys163, Val192, and Thr194 each coordinate NADP(+). Tyr159 acts as the Proton donor in catalysis. Lys163 acts as the Lowers pKa of active site Tyr in catalysis.

Belongs to the short-chain dehydrogenases/reductases (SDR) family.

Its subcellular location is the cytoplasm. It localises to the nucleus. This is an uncharacterized protein from Schizosaccharomyces pombe (strain 972 / ATCC 24843) (Fission yeast).